Here is a 387-residue protein sequence, read N- to C-terminus: Early growth response protein 3 (387 aa).

Positions 241–283 are disordered; that stretch reads PGFGSLPQPPLTLKPIRPRKYPNRPSKTPLHERPHACPAEGCD. A compositionally biased stretch (basic and acidic residues) spans 269–283; that stretch reads PLHERPHACPAEGCD. 3 C2H2-type zinc fingers span residues 275–299, 305–327, and 333–355; these read HACPAEGCDRRFSRSDELTRHLRIH, FQCRICMRSFSRSDHLTTHIRTH, and FACEFCGRKFARSDERKRHAKIH. Residues 348–387 are disordered; sequence RKRHAKIHLKQKEKKAEKGGAPSASSAPPVSLAPVVTTCA. Residues 350 to 360 show a composition bias toward basic residues; the sequence is RHAKIHLKQKE. Residues 368-387 show a composition bias toward low complexity; the sequence is APSASSAPPVSLAPVVTTCA.

Belongs to the EGR C2H2-type zinc-finger protein family.

It localises to the nucleus. Its function is as follows. Probable transcription factor involved in muscle spindle development. This Homo sapiens (Human) protein is Early growth response protein 3 (EGR3).